A 2207-amino-acid polypeptide reads, in one-letter code: Genome polyprotein (2207 aa).

A lipid anchor (N-myristoyl glycine; by host) is attached at Gly-2. At 2-1518 (GAQVSSQKVG…NINRAMTILQ (1517 aa)) the chain is on the cytoplasmic side. The tract at residues 579–599 (GLGDLIEGVVEGVTRNALTPL) is amphipathic alpha-helix. Residues 597–613 (TPLTPANNLPDTQSSGP) show a composition bias toward polar residues. 2 disordered regions span residues 597 to 620 (TPLTPANNLPDTQSSGPAHSKETP) and 628 to 647 (GATNPLVPSDTVQTRHVIQK). Active-site for protease 2A activity residues include His-899 and Asp-917. Cys-934 and Cys-936 together coordinate Zn(2+). The active-site For protease 2A activity is Cys-988. Zn(2+)-binding residues include Cys-994 and His-996. The membrane-binding stretch occupies residues 1126-1198 (GDSWLKKFTE…HQSCPSQEHQ (73 aa)). Residues 1126 to 1264 (GDSWLKKFTE…SPGTGKSVAT (139 aa)) form an oligomerization region. Residues 1147-1151 (SNKIS) form an RNA-binding region. The 157-residue stretch at 1230–1386 (EHTINNYVQF…SEYSRDGKLN (157 aa)) folds into the SF3 helicase domain. Residue 1254–1261 (GSPGTGKS) participates in ATP binding. 4 residues coordinate Zn(2+): Cys-1394, Cys-1397, Cys-1406, and Cys-1411. The segment at 1394–1411 (CKNCHHPANFKRCCPLVC) adopts a C4-type zinc-finger fold. An RNA-binding region spans residues 1438-1445 (ERNRRSSI). Residues 1449-1454 (MEALFQ) form an oligomerization region. The stretch at 1519 to 1534 (AVTTFAAVAGVVYVMY) is an intramembrane region. At 1535–2207 (KLFAGHQGAY…TLYRRWLDSF (673 aa)) the chain is on the cytoplasmic side. Position 1544 is an O-(5'-phospho-RNA)-tyrosine (Tyr-1544). Positions 1564–1742 (GPGFDYAVAM…FAAALKRSYF (179 aa)) constitute a Peptidase C3 domain. Catalysis depends on for protease 3C activity residues His-1603, Glu-1634, and Cys-1710. A RdRp catalytic domain is found at 1973–2088 (EKLFAFDYTG…SYPHEVDASL (116 aa)). Residues Asp-1979 and Asp-2074 each contribute to the Mg(2+) site.

The protein belongs to the picornaviruses polyprotein family. Interacts with capsid protein VP1 and capsid protein VP3 to form heterotrimeric protomers. In terms of assembly, interacts with capsid protein VP0, and capsid protein VP3 to form heterotrimeric protomers. Interacts with human PVR. Five protomers subsequently associate to form pentamers which serve as building blocks for the capsid. Interacts with capsid protein VP2, capsid protein VP3 and capsid protein VP4 following cleavage of capsid protein VP0. As to quaternary structure, interacts with capsid protein VP1 and capsid protein VP3 in the mature capsid. Interacts with capsid protein VP0 and capsid protein VP1 to form heterotrimeric protomers. Five protomers subsequently associate to form pentamers which serve as building blocks for the capsid. Interacts with capsid protein VP4 in the mature capsid. Interacts with protein 2C; this interaction may be important for virion morphogenesis. In terms of assembly, interacts with capsid protein VP1 and capsid protein VP3. As to quaternary structure, homodimer. Homohexamer; forms a hexameric ring structure with 6-fold symmetry characteristic of AAA+ ATPases. Interacts (via N-terminus) with host RTN3 (via reticulon domain); this interaction is important for viral replication. Interacts with capsid protein VP3; this interaction may be important for virion morphogenesis. In terms of assembly, interacts with protein 3CD. As to quaternary structure, homodimer. Interacts with host GBF1. Interacts (via GOLD domain) with host ACBD3 (via GOLD domain); this interaction allows the formation of a viral protein 3A/ACBD3 heterotetramer with a 2:2 stoichiometry, which will stimulate the recruitment of host PI4KB in order to synthesize PI4P at the viral RNA replication sites. Interacts with RNA-directed RNA polymerase. In terms of assembly, interacts with protein 3AB and with RNA-directed RNA polymerase. As to quaternary structure, interacts with Viral protein genome-linked and with protein 3CD. Mg(2+) serves as cofactor. In terms of processing, specific enzymatic cleavages in vivo by the viral proteases yield processing intermediates and the mature proteins. Myristoylation is required for the formation of pentamers during virus assembly. Further assembly of 12 pentamers and a molecule of genomic RNA generates the provirion. Post-translationally, during virion maturation, immature virions are rendered infectious following cleavage of VP0 into VP4 and VP2. This maturation seems to be an autocatalytic event triggered by the presence of RNA in the capsid and it is followed by a conformational change infectious virion. In terms of processing, myristoylation is required during RNA encapsidation and formation of the mature virus particle. VPg is uridylylated by the polymerase into VPg-pUpU. This acts as a nucleotide-peptide primer for the genomic RNA replication.

Its subcellular location is the virion. The protein resides in the host cytoplasm. It localises to the host cytoplasmic vesicle membrane. It is found in the host nucleus. It catalyses the reaction a ribonucleoside 5'-triphosphate + H2O = a ribonucleoside 5'-diphosphate + phosphate + H(+). The catalysed reaction is Selective cleavage of Tyr-|-Gly bond in the picornavirus polyprotein.. The enzyme catalyses RNA(n) + a ribonucleoside 5'-triphosphate = RNA(n+1) + diphosphate. It carries out the reaction Selective cleavage of Gln-|-Gly bond in the poliovirus polyprotein. In other picornavirus reactions Glu may be substituted for Gln, and Ser or Thr for Gly.. Its activity is regulated as follows. Replication or transcription is subject to high level of random mutations by the nucleotide analog ribavirin. In terms of biological role, forms an icosahedral capsid of pseudo T=3 symmetry with capsid proteins VP2 and VP3. The capsid is 300 Angstroms in diameter, composed of 60 copies of each capsid protein and enclosing the viral positive strand RNA genome. Capsid protein VP1 mainly forms the vertices of the capsid. Capsid protein VP1 interacts with host cell receptor PVR to provide virion attachment to target host cells. This attachment induces virion internalization predominantly through clathrin- and caveolin-independent endocytosis in Hela cells and through caveolin-mediated endocytosis in brain microvascular endothelial cells. Tyrosine kinases are probably involved in the entry process. Virus binding to PVR induces increased junctional permeability and rearrangement of junctional proteins. Modulation of endothelial tight junctions, as well as cytolytic infection of endothelial cells themselves, may result in loss of endothelial integrity which may help the virus to reach the CNS. After binding to its receptor, the capsid undergoes conformational changes. Capsid protein VP1 N-terminus (that contains an amphipathic alpha-helix) and capsid protein VP4 are externalized. Together, they shape a pore in the host membrane through which viral genome is translocated to host cell cytoplasm. Its function is as follows. Forms an icosahedral capsid of pseudo T=3 symmetry with capsid proteins VP2 and VP3. The capsid is 300 Angstroms in diameter, composed of 60 copies of each capsid protein and enclosing the viral positive strand RNA genome. Lies on the inner surface of the capsid shell. After binding to the host receptor, the capsid undergoes conformational changes. Capsid protein VP4 is released, Capsid protein VP1 N-terminus is externalized, and together, they shape a pore in the host membrane through which the viral genome is translocated into the host cell cytoplasm. Functionally, component of immature procapsids, which is cleaved into capsid proteins VP4 and VP2 after maturation. Allows the capsid to remain inactive before the maturation step. In terms of biological role, cysteine protease that cleaves viral polyprotein and specific host proteins. It is responsible for the autocatalytic cleavage between the P1 and P2 regions, which is the first cleavage occurring in the polyprotein. Also cleaves the host translation initiation factor EIF4G1, in order to shut down the capped cellular mRNA translation. Inhibits the host nucleus-cytoplasm protein and RNA trafficking by cleaving host members of the nuclear pores including NUP98, NUP62 and NUP153. Counteracts stress granule formation probably by antagonizing its assembly or promoting its dissassembly. Cleaves and inhibits host IFIH1/MDA5, thereby inhibiting the type-I IFN production and the establishment of the antiviral state. Cleaves and inhibits host MAVS, thereby inhibiting the type-I IFN production and the establishment of the antiviral state. Its function is as follows. Plays an essential role in the virus replication cycle by acting as a viroporin. Creates a pore in the host endoplasmic reticulum and as a consequence releases Ca2+ in the cytoplasm of infected cell. In turn, high levels of cytoplasmic calcium may trigger membrane trafficking and transport of viral ER-associated proteins to viroplasms, sites of viral genome replication. Induces and associates with structural rearrangements of intracellular membranes. Displays RNA-binding, nucleotide binding and NTPase activities. May play a role in virion morphogenesis and viral RNA encapsidation by interacting with the capsid protein VP3. Functionally, localizes the viral replication complex to the surface of membranous vesicles. Together with protein 3CD binds the Cis-Active RNA Element (CRE) which is involved in RNA synthesis initiation. Acts as a cofactor to stimulate the activity of 3D polymerase, maybe through a nucleid acid chaperone activity. In terms of biological role, localizes the viral replication complex to the surface of membranous vesicles. It inhibits host cell endoplasmic reticulum-to-Golgi apparatus transport and causes the disassembly of the Golgi complex, possibly through GBF1 interaction. This would result in depletion of MHC, trail receptors and IFN receptors at the host cell surface. Plays an essential role in viral RNA replication by recruiting ACBD3 and PI4KB at the viral replication sites, thereby allowing the formation of the rearranged membranous structures where viral replication takes place. Its function is as follows. Acts as a primer for viral RNA replication and remains covalently bound to viral genomic RNA. VPg is uridylylated prior to priming replication into VPg-pUpU. The oriI viral genomic sequence may act as a template for this. The VPg-pUpU is then used as primer on the genomic RNA poly(A) by the RNA-dependent RNA polymerase to replicate the viral genome. During genome replication, the VPg-RNA linkage is removed by the host TDP2, thereby accelerating replication. During the late stage of the replication cycle, host TDP2 is excluded from sites of viral RNA synthesis and encapsidation, allowing for the generation of progeny virions. Involved in the viral replication complex and viral polypeptide maturation. It exhibits protease activity with a specificity and catalytic efficiency that is different from protease 3C. Protein 3CD lacks polymerase activity. Protein 3CD binds to the 5'UTR of the viral genome. Functionally, major viral protease that mediates proteolytic processing of the polyprotein. Cleaves host EIF5B, contributing to host translation shutoff. Also cleaves host PABPC1, contributing to host translation shutoff. Cleaves host RIGI and thus contributes to the inhibition of type I interferon production. Cleaves host NLRP1, triggers host N-glycine-mediated degradation of the autoinhibitory NLRP1 N-terminal fragment. Inhibits the integrated stress response (ISR) in the infected cell by cleaving host G3BP1. Stress granule formation is thus inhibited, which allows protein synthesis and viral replication. In terms of biological role, replicates the viral genomic RNA on the surface of intracellular membranes. May form linear arrays of subunits that propagate along a strong head-to-tail interaction called interface-I. Covalently attaches UMP to a tyrosine of VPg, which is used to prime RNA synthesis. The positive stranded RNA genome is first replicated at virus induced membranous vesicles, creating a dsRNA genomic replication form. This dsRNA is then used as template to synthesize positive stranded RNA genomes. ss(+)RNA genomes are either translated, replicated or encapsidated. This is Genome polyprotein from Homo sapiens (Human).